Reading from the N-terminus, the 223-residue chain is Putative archaetidylserine decarboxylase proenzyme (223 aa).

Catalysis depends on Ser183, which acts as the Schiff-base intermediate with substrate; via pyruvic acid. A Pyruvic acid (Ser); by autocatalysis modification is found at Ser183.

Belongs to the phosphatidylserine decarboxylase family. PSD-A subfamily. Heterodimer of a large membrane-associated beta subunit and a small pyruvoyl-containing alpha subunit. Pyruvate is required as a cofactor. In terms of processing, is synthesized initially as an inactive proenzyme. Formation of the active enzyme involves a self-maturation process in which the active site pyruvoyl group is generated from an internal serine residue via an autocatalytic post-translational modification. Two non-identical subunits are generated from the proenzyme in this reaction, and the pyruvate is formed at the N-terminus of the alpha chain, which is derived from the carboxyl end of the proenzyme. The post-translation cleavage follows an unusual pathway, termed non-hydrolytic serinolysis, in which the side chain hydroxyl group of the serine supplies its oxygen atom to form the C-terminus of the beta chain, while the remainder of the serine residue undergoes an oxidative deamination to produce ammonia and the pyruvoyl prosthetic group on the alpha chain.

Its subcellular location is the cell membrane. The catalysed reaction is archaetidylserine + H(+) = archaetidylethanolamine + CO2. In terms of biological role, catalyzes the formation of archaetidylethanolamine (PtdEtn) from archaetidylserine (PtdSer). This Methanothermobacter thermautotrophicus (strain ATCC 29096 / DSM 1053 / JCM 10044 / NBRC 100330 / Delta H) (Methanobacterium thermoautotrophicum) protein is Putative archaetidylserine decarboxylase proenzyme.